A 1191-amino-acid chain; its full sequence is DNA-directed RNA polymerase subunit beta (1191 aa).

A compositionally biased stretch (basic and acidic residues) spans 1171 to 1181 (RVKQEAEEKQA). The interval 1171–1191 (RVKQEAEEKQAEQVSEVVQED) is disordered. Residues 1182–1191 (EQVSEVVQED) are compositionally biased toward low complexity.

This sequence belongs to the RNA polymerase beta chain family. In terms of assembly, the RNAP catalytic core consists of 2 alpha, 1 beta, 1 beta' and 1 omega subunit. When a sigma factor is associated with the core the holoenzyme is formed, which can initiate transcription.

It carries out the reaction RNA(n) + a ribonucleoside 5'-triphosphate = RNA(n+1) + diphosphate. DNA-dependent RNA polymerase catalyzes the transcription of DNA into RNA using the four ribonucleoside triphosphates as substrates. The protein is DNA-directed RNA polymerase subunit beta of Streptococcus agalactiae serotype Ia (strain ATCC 27591 / A909 / CDC SS700).